The primary structure comprises 584 residues: Extracellular serine/threonine protein kinase FAM20C (584 aa).

Residues 1–10 lie on the Cytoplasmic side of the membrane; that stretch reads MKMMLVRRFR. A propeptide spanning residues 1–92 is cleaved from the precursor; it reads MKMMLVRRFR…PNKHTLRILQ (92 aa). The chain crosses the membrane as a helical; Signal-anchor for type II membrane protein span at residues 11-31; the sequence is VLILMVFLVACALHIALDLLP. At 32-584 the chain is on the lumenal side; that stretch reads RLERRGARPS…DTEHRAASAR (553 aa). Disordered stretches follow at residues 62-81 and 94-159; these read QVRG…GDAG and FSSD…GDAS. Low complexity-rich tracts occupy residues 71–81 and 95–112; these read PAASSAAGDAG and SSDP…KLPP. Asparagine 101 carries N-linked (GlcNAc...) asparagine glycosylation. Serine 106 is subject to Phosphoserine. Residues 116–149 are compositionally biased toward basic and acidic residues; the sequence is PAERALRGRDPGALRPHDPAHRPLLRDPGPRRSE. 3 residues coordinate ATP: glutamine 269, lysine 285, and glutamate 306. Glutamate 306 is a binding site for Mn(2+). The N-linked (GlcNAc...) asparagine glycan is linked to asparagine 335. Residues 354–565 are kinase domain; that stretch reads FISPANNICF…AVRDCVERNG (212 aa). 2 disulfides stabilise this stretch: cysteine 362–cysteine 378 and cysteine 367–cysteine 371. Residue 389–392 participates in ATP binding; it reads AAFL. 2 disulfides stabilise this stretch: cysteine 426/cysteine 500 and cysteine 501/cysteine 560. Residue aspartate 458 is part of the active site. ATP is bound at residue glutamate 463. The N-linked (GlcNAc...) asparagine glycan is linked to asparagine 470. Residue aspartate 478 participates in ATP binding. Residue aspartate 478 participates in Mn(2+) binding.

The protein belongs to the FAM20 family. Homodimer; disulfide-linked. Interacts with FAM20A; probably forming a heterotetramer of 2 subunits of FAM20A and 2 subunits of FAM20C. Interacts with protease MBTPS1/S1P; the interaction results in FAM20C cleavage and secretion. Interacts with COPII components SEC23A and SEC24A; transport of FAM20C from the endoplasmic reticulum to the Golgi is likely to be mediated by COPII vesicles. Mn(2+) is required as a cofactor. Post-translationally, N-glycosylation is required for folding. Autophosphorylated. In terms of processing, propeptide cleavage by MBTPS1/S1P promotes FAM20C secretion and maximal kinase activity which is essential for efficient osteoblast differentiation and biomineralization. As to expression, widely expressed.

The protein resides in the golgi apparatus membrane. It is found in the secreted. It localises to the endoplasmic reticulum. It catalyses the reaction L-seryl-[protein] + ATP = O-phospho-L-seryl-[protein] + ADP + H(+). It carries out the reaction L-threonyl-[protein] + ATP = O-phospho-L-threonyl-[protein] + ADP + H(+). With respect to regulation, serine/threonine protein kinase activity is increased upon interaction with FAM20A. Golgi serine/threonine protein kinase that phosphorylates secretory pathway proteins within Ser-x-Glu/pSer motifs and plays a key role in biomineralization of bones and teeth. Constitutes the main protein kinase for extracellular proteins, generating the majority of the extracellular phosphoproteome. Mainly phosphorylates proteins within the Ser-x-Glu/pSer motif, but also displays a broader substrate specificity. Phosphorylates ERO1A, enhancing its activity which is required to maintain endoplasmic reticulum redox homeostasis and for oxidative protein folding. During endoplasmic reticulum stress, phosphorylates P4HB/PDIA1 which induces a functional switch, causing P4HB to change from an oxidoreductase to a molecular chaperone. This is critical to maintain ER proteostasis and reduce cell death under ER stress. Phosphorylation of P4HB also promotes its interaction with ERN1, leading to reduced activity of ERN1, a key sensor for the endoplasmic reticulum unfolded protein response. Required for osteoblast differentiation and mineralization. Phosphorylates casein as well as a number of proteins involved in biomineralization such as AMELX, AMTN, ENAM and SPP1/OPN. In addition to its role in biomineralization, also plays a role in lipid homeostasis, wound healing and cell migration and adhesion. The polypeptide is Extracellular serine/threonine protein kinase FAM20C (Homo sapiens (Human)).